The sequence spans 662 residues: Mitochondrial Rho GTPase 1 (662 aa).

At 1–634 (MTKETIRVVI…AKDVDYRQTA (634 aa)) the chain is on the cytoplasmic side. The region spanning 3–185 (KETIRVVICG…FYLCQRAITH (183 aa)) is the Miro 1 domain. GTP-binding positions include 12 to 19 (GDEGVGKS), 62 to 64 (DTS), and 116 to 119 (NKCD). EF-hand domains are found at residues 201 to 236 (LAVM…CFNK) and 330 to 365 (KGYR…TPGL). 9 residues coordinate Ca(2+): Asp214, Asn216, Asp218, Tyr220, Glu225, Asp343, Asp345, Asp347, and Glu354. The Miro 2 domain occupies 446–611 (RKVFNCFVIG…FIKITEAALD (166 aa)). GTP-binding positions include 455–462 (GKPCCGKS), 491–495 (ELKGG), and 560–563 (SKAD). A helical; Anchor for type IV membrane protein transmembrane segment spans residues 635–655 (LIFGSTVGFVALCSFTLMKLF). Residues 656-662 (KSSKFSK) lie on the Mitochondrial intermembrane side of the membrane.

Belongs to the mitochondrial Rho GTPase family.

The protein resides in the mitochondrion outer membrane. Mitochondrial GTPase involved in mitochondrial trafficking. Probably involved in control of anterograde transport of mitochondria and their subcellular distribution. The sequence is that of Mitochondrial Rho GTPase 1 (GEM1) from Saccharomyces cerevisiae (strain ATCC 204508 / S288c) (Baker's yeast).